A 470-amino-acid chain; its full sequence is Asparagine--tRNA ligase (470 aa).

Belongs to the class-II aminoacyl-tRNA synthetase family. Homodimer.

The protein resides in the cytoplasm. The catalysed reaction is tRNA(Asn) + L-asparagine + ATP = L-asparaginyl-tRNA(Asn) + AMP + diphosphate + H(+). The protein is Asparagine--tRNA ligase of Blochmanniella pennsylvanica (strain BPEN).